The primary structure comprises 595 residues: Probable Xaa-Pro aminopeptidase CHGG_02942 (595 aa).

Positions 51-76 (KSGPSSSNLSPSTLSTEKTSSDSSGV) are disordered. The span at 52-66 (SGPSSSNLSPSTLST) shows a compositional bias: low complexity. Residues Asp334, Asp345, Glu541, and Glu563 each coordinate Mn(2+).

The protein belongs to the peptidase M24B family. Requires Mn(2+) as cofactor.

The catalysed reaction is Release of any N-terminal amino acid, including proline, that is linked to proline, even from a dipeptide or tripeptide.. Functionally, catalyzes the removal of a penultimate prolyl residue from the N-termini of peptides. The polypeptide is Probable Xaa-Pro aminopeptidase CHGG_02942 (Chaetomium globosum (strain ATCC 6205 / CBS 148.51 / DSM 1962 / NBRC 6347 / NRRL 1970) (Soil fungus)).